Reading from the N-terminus, the 586-residue chain is NudC domain-containing protein 1 (586 aa).

The region spanning 275–364 (KREPLYNWQQ…EPGCTWAELV (90 aa)) is the CS domain.

It localises to the cytoplasm. It is found in the nucleus. The sequence is that of NudC domain-containing protein 1 from Xenopus laevis (African clawed frog).